Here is a 319-residue protein sequence, read N- to C-terminus: 2-oxoglutarate and iron-dependent oxygenase domain-containing protein 3 (319 aa).

Residues 1–34 (MAPQRRAATKAPEGNGAAERRNRSSTKKDRAPRE) form a disordered region. The Cytoplasmic portion of the chain corresponds to 1 to 42 (MAPQRRAATKAPEGNGAAERRNRSSTKKDRAPREVQRLWQRP). Basic and acidic residues predominate over residues 18 to 34 (AERRNRSSTKKDRAPRE). The chain crosses the membrane as a helical; Signal-anchor for type II membrane protein span at residues 43-65 (WLRTAGLGAGFVLTALLLWSSLG). At 66–319 (ADDGVAEVLA…DHGIEDPAFP (254 aa)) the chain is on the lumenal side. Residues 207–309 (KPTFFSRINS…AITIAFSCNP (103 aa)) enclose the Fe2OG dioxygenase domain. N-linked (GlcNAc...) asparagine glycosylation occurs at Asn-215. His-230, Asp-232, and His-288 together coordinate Fe cation. Arg-298 is an active-site residue. Arg-298 serves as a coordination point for 2-oxoglutarate.

Belongs to the OGFOD3 family. Fe(2+) serves as cofactor. The cofactor is L-ascorbate.

The protein localises to the membrane. This Homo sapiens (Human) protein is 2-oxoglutarate and iron-dependent oxygenase domain-containing protein 3 (OGFOD3).